A 520-amino-acid chain; its full sequence is 2-isopropylmalate synthase (520 aa).

Positions 12 to 274 (IRIFDTTLRD…DSAINTPRIV (263 aa)) constitute a Pyruvate carboxyltransferase domain. Mn(2+)-binding residues include D21, H209, H211, and N245. Residues 396-520 (RLASMTISDV…VVAGKTAAVA (125 aa)) are regulatory domain.

It belongs to the alpha-IPM synthase/homocitrate synthase family. LeuA type 1 subfamily. In terms of assembly, homodimer. Mn(2+) is required as a cofactor.

It is found in the cytoplasm. The catalysed reaction is 3-methyl-2-oxobutanoate + acetyl-CoA + H2O = (2S)-2-isopropylmalate + CoA + H(+). It functions in the pathway amino-acid biosynthesis; L-leucine biosynthesis; L-leucine from 3-methyl-2-oxobutanoate: step 1/4. Catalyzes the condensation of the acetyl group of acetyl-CoA with 3-methyl-2-oxobutanoate (2-ketoisovalerate) to form 3-carboxy-3-hydroxy-4-methylpentanoate (2-isopropylmalate). The sequence is that of 2-isopropylmalate synthase from Xanthomonas euvesicatoria pv. vesicatoria (strain 85-10) (Xanthomonas campestris pv. vesicatoria).